The following is a 110-amino-acid chain: Large ribosomal subunit protein uL22 (110 aa).

The protein belongs to the universal ribosomal protein uL22 family. As to quaternary structure, part of the 50S ribosomal subunit.

Functionally, this protein binds specifically to 23S rRNA; its binding is stimulated by other ribosomal proteins, e.g. L4, L17, and L20. It is important during the early stages of 50S assembly. It makes multiple contacts with different domains of the 23S rRNA in the assembled 50S subunit and ribosome. The globular domain of the protein is located near the polypeptide exit tunnel on the outside of the subunit, while an extended beta-hairpin is found that lines the wall of the exit tunnel in the center of the 70S ribosome. In Pseudomonas aeruginosa (strain LESB58), this protein is Large ribosomal subunit protein uL22.